The sequence spans 310 residues: 4-hydroxyproline 2-epimerase (310 aa).

C88 functions as the Proton acceptor in the catalytic mechanism. Substrate-binding positions include 89-90, H208, and D232; that span reads GH. C236 (proton donor) is an active-site residue. Position 237–238 (237–238) interacts with substrate; that stretch reads GT.

Belongs to the proline racemase family.

It carries out the reaction trans-4-hydroxy-L-proline = cis-4-hydroxy-D-proline. In terms of biological role, catalyzes the epimerization of trans-4-hydroxy-L-proline (t4LHyp) to cis-4-hydroxy-D-proline (c4DHyp). Is likely involved in a degradation pathway that converts t4LHyp to alpha-ketoglutarate. Can also catalyze the dehydration of trans-3-hydroxy-L-proline (t3LHyp) to Delta(1)-pyrroline-2-carboxylate (Pyr2C), albeit with 42-fold lower efficiency. Displays no proline racemase activity. In Burkholderia thailandensis (strain ATCC 700388 / DSM 13276 / CCUG 48851 / CIP 106301 / E264), this protein is 4-hydroxyproline 2-epimerase.